Here is a 662-residue protein sequence, read N- to C-terminus: LIM domain kinase 1 (662 aa).

LIM zinc-binding domains follow at residues 24–83 and 84–145; these read PVCA…RFGE and LCHG…MVVT. Residues 166-259 form the PDZ domain; it reads LVSIPACSDG…LLQLTIEHDP (94 aa). The segment at 262-328 is disordered; that stretch reads PLPRDLALPC…ASQRKDIGRS (67 aa). Pro residues predominate over residues 272-287; the sequence is SPLPDPHSPLRSPVPA. Positions 309-320 are enriched in low complexity; it reads SPGSSSVGSPAS. The 266-residue stretch at 346 to 611 folds into the Protein kinase domain; that stretch reads LIHGEVLGKG…PSFSKLEQWL (266 aa). Residues 352-360 and K375 contribute to the ATP site; that span reads LGKGCFGQA. The active site involves D467.

Belongs to the protein kinase superfamily. TKL Ser/Thr protein kinase family. In terms of tissue distribution, expressed predominantly in the brain.

The protein resides in the cytoplasm. The protein localises to the nucleus. It is found in the cytoskeleton. It localises to the cell projection. Its subcellular location is the growth cone. It catalyses the reaction L-seryl-[protein] + ATP = O-phospho-L-seryl-[protein] + ADP + H(+). The enzyme catalyses L-threonyl-[protein] + ATP = O-phospho-L-threonyl-[protein] + ADP + H(+). Its function is as follows. Protein kinase which regulates actin filament dynamics. Phosphorylates and inactivates the actin binding/depolymerizing factor cofilin, thereby stabilizing the actin cytoskeleton. Required for motility of the axon growth cone. This is LIM domain kinase 1 (LIMK1) from Gallus gallus (Chicken).